Consider the following 495-residue polypeptide: MDLLQRAGLVVGLWVTYHILLGTYNVFFHPLRRFPGPRLAAATQLVNVYYIIRGINCKYLYELHEKYGDVVRTGPNELSFRTASAIRTIYGGNPGPDDTFHKNMIANIQETGDSDNLFFATGQQHNRYRRLIMPVFAERTIQGQGPMMQEYCSQLIQGLRNRCGRGYFPTQDGVVDIVPWTHFIISDILSHMLFGSGMNCLLNGDYHPWVMAGYKALIESTYIEAAHRLRPYHRILEYLLIPTRLRDGFRVHSAVSREKLQARSKEAEPYQFSLPSFTSESLSEQELFDNINVIATAAGETTSSALSAIMYYLTANPAAYDKAVTEVRQAFSNEAEITAASSASLPYLKAVIREAFRIRPTIPVGLHRLTPKGGREIDGKWVPAGTWISVANLAACRTSSHWKEAGRFIPERWLGDPEFASDNRDTSVPYSIGVRNCIGMSHANTQLRLILSRLLWNFDFEACPGNADPYDYLEYGTWQVEPLKLRVVDIRGQPK.

The helical transmembrane segment at Gly8–Phe28 threads the bilayer. Cys437 contacts heme.

It belongs to the cytochrome P450 family. Requires heme as cofactor.

It is found in the membrane. The enzyme catalyses (S,S)-2,5-di-(p-hydroxybenzyl)piperazine + reduced [NADPH--hemoprotein reductase] + O2 = (1S,4S)-4-[(4-hydroxyphenyl)methyl]-2,5-diazaspiro[bicyclo[3.2.1]octane-6,1'-cyclohexane]-2',5'-dien-4'-one + oxidized [NADPH--hemoprotein reductase] + 2 H2O + H(+). It functions in the pathway secondary metabolite biosynthesis. Its function is as follows. Cytochrome P450 monooxygenase; part of the gene cluster that mediates the biosynthesis of the alkaloid (-)-FR901483, a potent immunosuppressant that shows efficacy in animal models and a probable inhibitor of purine nucleotide biosynthesis by targeting phosphoribosylpyrophosphate amidotransferase (PPAT). Within the pathway, FrzC catalyzes the coupling between N10 and C1' to produce a 1,4-diazabicyclo[3.2.1]octane spiro-fused to a 2,5-cyclohexadienone. FrzC probably first catalyzes homolysis of the N-H bond to generate the N10 radical which is followed by an O-H abstraction to give the phenolic radical which can be delocalized to C1'. Radical coupling between N10 and C1' then forms. The biosynthesis of (-)-FR901483 starts with the condensation of two L-tyrosines to yield (S,S)-dityrosyl-piperazine. This process occurs in 3 steps with the non-canonical nonribosomal peptide synthetase FrzA catalyzing the reduction of L-tyrosine into L-tyrosinal, the spontaneous condensation of 2 L-tyrosinal units, and the subsequent reduction by the NmrA-like family domain-containing oxidoreductase FrzB. The cytochrome P450 monooxygenase FrzC then performs coupling between N10 and C1' to morph the piperazine into a 1,4-diazabicyclo[3.2.1]octane spiro-fused to a 2,5-cyclohexadienone. The dienone portion is further reduced to cyclohexanone by the flavin-dependent reductase FrzD. The methyltranserases (MTs) FrzE and FrzF are then involved in the methylation at the C10' amine and the C4 phenolic oxygen, respectively. The order of the two MTs appear to be interchangeable. Cleavage of the C9-N10' bond by the dioxygenase FrzG then leads to formation of a conjugated iminium. In addition to the oxidation of C9, an additional dehydrogenation between C7 and C8 can occur to give a likely shunt product. The next biosynthetic step is the intramolecular aldol condensation catalyzed by the newly identified aldolase FrzH to yield an aza-tricyclic product with the formation of a C9-C3' bond. The short-chain dehydrogenase/reductase FrzI then produces dephospho-(-)-FR901483 that is phosphorylated at C4'-OH into (-)-FR901483 by the phosphotransferase FrzJ. This chain is Cytochrome P450 monooxygenase FrzC, found in Cladobotryum sp.